Here is a 70-residue protein sequence, read N- to C-terminus: Large ribosomal subunit protein bL31 (70 aa).

Zn(2+) contacts are provided by cysteine 16, cysteine 18, cysteine 37, and cysteine 40.

The protein belongs to the bacterial ribosomal protein bL31 family. Type A subfamily. As to quaternary structure, part of the 50S ribosomal subunit. Zn(2+) is required as a cofactor.

Binds the 23S rRNA. This Shewanella woodyi (strain ATCC 51908 / MS32) protein is Large ribosomal subunit protein bL31.